The chain runs to 157 residues: 2-C-methyl-D-erythritol 2,4-cyclodiphosphate synthase (157 aa).

2 residues coordinate a divalent metal cation: aspartate 9 and histidine 11. 4-CDP-2-C-methyl-D-erythritol 2-phosphate-binding positions include 9–11 and 35–36; these read DVH and HS. Position 43 (histidine 43) interacts with a divalent metal cation. 4-CDP-2-C-methyl-D-erythritol 2-phosphate-binding positions include 57 to 59, phenylalanine 140, and arginine 143; that span reads DIG.

Belongs to the IspF family. In terms of assembly, homotrimer. The cofactor is a divalent metal cation.

It carries out the reaction 4-CDP-2-C-methyl-D-erythritol 2-phosphate = 2-C-methyl-D-erythritol 2,4-cyclic diphosphate + CMP. It functions in the pathway isoprenoid biosynthesis; isopentenyl diphosphate biosynthesis via DXP pathway; isopentenyl diphosphate from 1-deoxy-D-xylulose 5-phosphate: step 4/6. Its function is as follows. Involved in the biosynthesis of isopentenyl diphosphate (IPP) and dimethylallyl diphosphate (DMAPP), two major building blocks of isoprenoid compounds. Catalyzes the conversion of 4-diphosphocytidyl-2-C-methyl-D-erythritol 2-phosphate (CDP-ME2P) to 2-C-methyl-D-erythritol 2,4-cyclodiphosphate (ME-CPP) with a corresponding release of cytidine 5-monophosphate (CMP). The sequence is that of 2-C-methyl-D-erythritol 2,4-cyclodiphosphate synthase from Caldicellulosiruptor bescii (strain ATCC BAA-1888 / DSM 6725 / KCTC 15123 / Z-1320) (Anaerocellum thermophilum).